A 259-amino-acid chain; its full sequence is NADP-dependent 3-hydroxy acid dehydrogenase (259 aa).

I11 contacts NADP(+). S42 is subject to Phosphoserine. T43 bears the Phosphothreonine mark. Positions 65, 92, 126, 158, 162, and 191 each coordinate NADP(+). Y158 functions as the Proton acceptor in the catalytic mechanism. Catalysis depends on K162, which acts as the Lowers pKa of active site Tyr.

This sequence belongs to the short-chain dehydrogenases/reductases (SDR) family. As to quaternary structure, homotetramer.

It is found in the cytoplasm. The protein resides in the nucleus. The catalysed reaction is L-allo-threonine + NADP(+) = aminoacetone + CO2 + NADPH. Its function is as follows. NADP-dependent dehydrogenase with broad substrate specificity acting on 3-hydroxy acids. Catalyzes the NADP-dependent oxidation of L-allo-threonine to L-2-amino-3-keto-butyrate, which is spontaneously decarboxylated into aminoacetone. Also acts on D-threonine, L-serine, D-serine, D-3-hydroxyisobutyrate, L-3-hydroxyisobutyrate, D-glycerate and L-glycerate. The polypeptide is NADP-dependent 3-hydroxy acid dehydrogenase (Schizosaccharomyces pombe (strain 972 / ATCC 24843) (Fission yeast)).